A 210-amino-acid chain; its full sequence is Protein VNG_2543C (210 aa).

The AMMECR1 domain maps to 12-206 (EDGARTVELA…ETGDEDDPVE (195 aa)).

In Halobacterium salinarum (strain ATCC 700922 / JCM 11081 / NRC-1) (Halobacterium halobium), this protein is Protein VNG_2543C.